Reading from the N-terminus, the 309-residue chain is General transcription factor IIH subunit 3 (309 aa).

The segment at 269–286 (CSVCLSIFCNFSPICTTC) adopts a C4-type zinc-finger fold.

It belongs to the TFB4 family. In terms of assembly, part of a TFIID-containing RNA polymerase II pre-initiation complex that is composed of TBP and at least GTF2A1, GTF2A2, GTF2E1, GTF2E2, GTF2F1, GTF2H2, GTF2H3, GTF2H4, GTF2H5, GTF2B, TCEA1, ERCC2, ERCC3, TAF1, TAF2, TAF3, TAF4, TAF5, TAF6, TAF7, TAF8, TAF9, TAF10, TAF11, TAF12 and TAF13. Component of the 7-subunit TFIIH core complex composed of XPB/ERCC3, XPD/ERCC2, GTF2H1, GTF2H2, GTF2H3, GTF2H4 and GTF2H5, which is active in NER. The core complex associates with the 3-subunit CDK-activating kinase (CAK) module composed of CCNH/cyclin H, CDK7 and MNAT1 to form the 10-subunit holoenzyme (holo-TFIIH) active in transcription. Interacts with RARA; the interaction requires prior phosphorylation of RARA on 'Ser-369' which then enhances interaction of RARA with CDK7.

The protein localises to the nucleus. In terms of biological role, component of the general transcription and DNA repair factor IIH (TFIIH) core complex, which is involved in general and transcription-coupled nucleotide excision repair (NER) of damaged DNA and, when complexed to CAK, in RNA transcription by RNA polymerase II. In NER, TFIIH acts by opening DNA around the lesion to allow the excision of the damaged oligonucleotide and its replacement by a new DNA fragment. In transcription, TFIIH has an essential role in transcription initiation. When the pre-initiation complex (PIC) has been established, TFIIH is required for promoter opening and promoter escape. Phosphorylation of the C-terminal tail (CTD) of the largest subunit of RNA polymerase II by the kinase module CAK controls the initiation of transcription. This chain is General transcription factor IIH subunit 3 (Gtf2h3), found in Mus musculus (Mouse).